Consider the following 304-residue polypeptide: Probable 5-dehydro-4-deoxyglucarate dehydratase (304 aa).

The protein belongs to the DapA family.

The catalysed reaction is 5-dehydro-4-deoxy-D-glucarate + H(+) = 2,5-dioxopentanoate + CO2 + H2O. It participates in carbohydrate acid metabolism; D-glucarate degradation; 2,5-dioxopentanoate from D-glucarate: step 2/2. The protein is Probable 5-dehydro-4-deoxyglucarate dehydratase of Rhodococcus jostii (strain RHA1).